A 688-amino-acid chain; its full sequence is Potassium-transporting ATPase ATP-binding subunit (688 aa).

A run of 4 helical transmembrane segments spans residues 35-55 (VMMVVWCCCVLLTIVCGVQFA), 62-82 (AVFSLGVTAWLWFTLLFANLA), 219-239 (IALSILLVALTLVFLLAVVTL), and 260-280 (VLVALLVCLIPTTIGGLLSAI). D313 serves as the catalytic 4-aspartylphosphate intermediate. ATP contacts are provided by residues D350, E354, 383 to 390 (FSAQTRMS), and K401. The Mg(2+) site is built by D524 and D528. A run of 3 helical transmembrane segments spans residues 594–614 (FAILPAAFITTYPQLGALNLM), 622–642 (AILSAVIFNALIIIGLIPLAL), and 668–688 (VVLPFIGIKVIDLFLTLMGWI).

It belongs to the cation transport ATPase (P-type) (TC 3.A.3) family. Type IA subfamily. The system is composed of three essential subunits: KdpA, KdpB and KdpC.

Its subcellular location is the cell inner membrane. The enzyme catalyses K(+)(out) + ATP + H2O = K(+)(in) + ADP + phosphate + H(+). Part of the high-affinity ATP-driven potassium transport (or Kdp) system, which catalyzes the hydrolysis of ATP coupled with the electrogenic transport of potassium into the cytoplasm. This subunit is responsible for energy coupling to the transport system and for the release of the potassium ions to the cytoplasm. This chain is Potassium-transporting ATPase ATP-binding subunit, found in Tolumonas auensis (strain DSM 9187 / NBRC 110442 / TA 4).